A 1164-amino-acid chain; its full sequence is DNA-directed RNA polymerase subunit beta (1164 aa).

Belongs to the RNA polymerase beta chain family. As to quaternary structure, the RNAP catalytic core consists of 2 alpha, 1 beta, 1 beta' and 1 omega subunit. When a sigma factor is associated with the core the holoenzyme is formed, which can initiate transcription.

It carries out the reaction RNA(n) + a ribonucleoside 5'-triphosphate = RNA(n+1) + diphosphate. DNA-dependent RNA polymerase catalyzes the transcription of DNA into RNA using the four ribonucleoside triphosphates as substrates. This Saccharopolyspora erythraea (strain ATCC 11635 / DSM 40517 / JCM 4748 / NBRC 13426 / NCIMB 8594 / NRRL 2338) protein is DNA-directed RNA polymerase subunit beta.